A 92-amino-acid chain; its full sequence is EIWKHFDADENGYIEGKFMQKYDKNSDQHVGSSAEFMEAWRDMSRLLPVQENFLLKFQGMKLTSEEFNAIFTFYDKNEPAILEMNIQQLWNY.

One can recognise an EF-hand domain in the interval 18-29 (FMQKYDKNSDQH).

The protein belongs to the calbindin family. As to expression, brain.

The protein is Protein 10 of Cavia porcellus (Guinea pig).